The following is a 123-amino-acid chain: Small ribosomal subunit protein uS12 (123 aa).

Asp89 carries the post-translational modification 3-methylthioaspartic acid.

The protein belongs to the universal ribosomal protein uS12 family. As to quaternary structure, part of the 30S ribosomal subunit. Contacts proteins S8 and S17. May interact with IF1 in the 30S initiation complex.

In terms of biological role, with S4 and S5 plays an important role in translational accuracy. Functionally, interacts with and stabilizes bases of the 16S rRNA that are involved in tRNA selection in the A site and with the mRNA backbone. Located at the interface of the 30S and 50S subunits, it traverses the body of the 30S subunit contacting proteins on the other side and probably holding the rRNA structure together. The combined cluster of proteins S8, S12 and S17 appears to hold together the shoulder and platform of the 30S subunit. The sequence is that of Small ribosomal subunit protein uS12 from Geobacter metallireducens (strain ATCC 53774 / DSM 7210 / GS-15).